An 883-amino-acid polypeptide reads, in one-letter code: N,N'-diacetylchitobiase (883 aa).

Positions 1-17 (MLKHSLIAASVITTLAG) are cleaved as a signal peptide. Cysteine 18 carries N-palmitoyl cysteine lipidation. Cysteine 18 carries S-diacylglycerol cysteine lipidation. Disulfide bonds link cysteine 54/cysteine 64, cysteine 394/cysteine 402, and cysteine 502/cysteine 577. Catalysis depends on glutamate 537, which acts as the Proton donor.

It belongs to the glycosyl hydrolase 20 family. This protein is probably a lipoprotein, its processing is inhibited by globomycin.

It is found in the cell outer membrane. It catalyses the reaction Hydrolysis of terminal non-reducing N-acetyl-D-hexosamine residues in N-acetyl-beta-D-hexosaminides.. It functions in the pathway glycan degradation; chitin degradation. In terms of biological role, hydrolysis of terminal, non-reducing N-acetyl-beta-D-glucosamine residues in chitobiose and higher analogs, and in glycoproteins. This chain is N,N'-diacetylchitobiase (chb), found in Vibrio harveyi (Beneckea harveyi).